The following is a 288-amino-acid chain: Light-independent protochlorophyllide reductase iron-sulfur ATP-binding protein (288 aa).

ATP is bound by residues 10–15 (GIGKST) and Lys-39. Ser-14 provides a ligand contact to Mg(2+). Positions 95 and 129 each coordinate [4Fe-4S] cluster. Residue 180–181 (NR) coordinates ATP.

It belongs to the NifH/BchL/ChlL family. As to quaternary structure, homodimer. Protochlorophyllide reductase is composed of three subunits; ChlL, ChlN and ChlB. It depends on [4Fe-4S] cluster as a cofactor.

Its subcellular location is the plastid. It localises to the chloroplast. The catalysed reaction is chlorophyllide a + oxidized 2[4Fe-4S]-[ferredoxin] + 2 ADP + 2 phosphate = protochlorophyllide a + reduced 2[4Fe-4S]-[ferredoxin] + 2 ATP + 2 H2O. It participates in porphyrin-containing compound metabolism; chlorophyll biosynthesis (light-independent). In terms of biological role, component of the dark-operative protochlorophyllide reductase (DPOR) that uses Mg-ATP and reduced ferredoxin to reduce ring D of protochlorophyllide (Pchlide) to form chlorophyllide a (Chlide). This reaction is light-independent. The L component serves as a unique electron donor to the NB-component of the complex, and binds Mg-ATP. This Chara vulgaris (Common stonewort) protein is Light-independent protochlorophyllide reductase iron-sulfur ATP-binding protein.